The chain runs to 126 residues: Interleukin-18-binding protein (126 aa).

Positions M1–A20 are cleaved as a signal peptide.

Belongs to the orthopoxvirus OPG022 family.

It is found in the secreted. Functionally, soluble IL18-binding protein that may modulate the host antiviral response. This chain is Interleukin-18-binding protein (OPG022), found in Bos taurus (Bovine).